The sequence spans 333 residues: Extracellular globin (333 aa).

The N-terminal stretch at 1–18 (MHSSIVLAIVLFVAIASA) is a signal peptide. 2 Globin domains span residues 25-167 (CMKS…HHGR) and 174-318 (CMNS…KHAK). The heme b site is built by Gln-82 and His-114. The N-linked (GlcNAc...) asparagine glycan is linked to Asn-216. The heme b site is built by Gln-231 and His-263. The disordered stretch occupies residues 314-333 (DKHAKAEKDHHEGEHKEEHH).

This sequence belongs to the globin family. In terms of assembly, homooctamer.

The protein resides in the secreted. Its subcellular location is the extracellular space. The polypeptide is Extracellular globin (Pseudoterranova decipiens (Sealworm)).